A 66-amino-acid polypeptide reads, in one-letter code: uncharacterized protein (66 aa).

This is an uncharacterized protein from Vaccinia virus (strain Copenhagen) (VACV).